A 99-amino-acid chain; its full sequence is Small ribosomal subunit protein uS17 (99 aa).

This sequence belongs to the universal ribosomal protein uS17 family. In terms of assembly, part of the 30S ribosomal subunit.

One of the primary rRNA binding proteins, it binds specifically to the 5'-end of 16S ribosomal RNA. The sequence is that of Small ribosomal subunit protein uS17 from Thermosipho melanesiensis (strain DSM 12029 / CIP 104789 / BI429).